The following is a 100-amino-acid chain: Urease subunit gamma (100 aa).

It belongs to the urease gamma subunit family. As to quaternary structure, heterotrimer of UreA (gamma), UreB (beta) and UreC (alpha) subunits. Three heterotrimers associate to form the active enzyme.

The protein localises to the cytoplasm. The enzyme catalyses urea + 2 H2O + H(+) = hydrogencarbonate + 2 NH4(+). It participates in nitrogen metabolism; urea degradation; CO(2) and NH(3) from urea (urease route): step 1/1. This Ralstonia nicotianae (strain ATCC BAA-1114 / GMI1000) (Ralstonia solanacearum) protein is Urease subunit gamma.